A 155-amino-acid polypeptide reads, in one-letter code: Ribosome maturation factor RimP (155 aa).

The protein belongs to the RimP family.

It localises to the cytoplasm. Required for maturation of 30S ribosomal subunits. This chain is Ribosome maturation factor RimP, found in Salinibacter ruber (strain DSM 13855 / M31).